Reading from the N-terminus, the 182-residue chain is UPF0215 protein Pcal_0119 (182 aa).

This sequence belongs to the UPF0215 family.

In Pyrobaculum calidifontis (strain DSM 21063 / JCM 11548 / VA1), this protein is UPF0215 protein Pcal_0119.